Consider the following 493-residue polypeptide: Probable cytosol aminopeptidase (493 aa).

Lys259 and Asp264 together coordinate Mn(2+). Lys271 is an active-site residue. Mn(2+)-binding residues include Asp282, Asp341, and Glu343. Residue Arg345 is part of the active site.

The protein belongs to the peptidase M17 family. Requires Mn(2+) as cofactor.

Its subcellular location is the cytoplasm. It carries out the reaction Release of an N-terminal amino acid, Xaa-|-Yaa-, in which Xaa is preferably Leu, but may be other amino acids including Pro although not Arg or Lys, and Yaa may be Pro. Amino acid amides and methyl esters are also readily hydrolyzed, but rates on arylamides are exceedingly low.. The catalysed reaction is Release of an N-terminal amino acid, preferentially leucine, but not glutamic or aspartic acids.. Its function is as follows. Presumably involved in the processing and regular turnover of intracellular proteins. Catalyzes the removal of unsubstituted N-terminal amino acids from various peptides. The chain is Probable cytosol aminopeptidase from Bacillus cytotoxicus (strain DSM 22905 / CIP 110041 / 391-98 / NVH 391-98).